The following is a 135-amino-acid chain: Large ribosomal subunit protein bL19 (135 aa).

It belongs to the bacterial ribosomal protein bL19 family.

In terms of biological role, this protein is located at the 30S-50S ribosomal subunit interface and may play a role in the structure and function of the aminoacyl-tRNA binding site. This Xanthomonas axonopodis pv. citri (strain 306) protein is Large ribosomal subunit protein bL19.